A 206-amino-acid polypeptide reads, in one-letter code: Pyridoxine/pyridoxamine 5'-phosphate oxidase (206 aa).

FMN is bound by residues 53–58 (RMVLLK), 68–69 (YT), lysine 75, and glutamine 97. Substrate is bound at residue lysine 58. Positions 115, 119, and 123 each coordinate substrate. FMN-binding positions include 132 to 133 (QS) and tryptophan 177. Residue 183 to 185 (RLH) participates in substrate binding. Arginine 187 serves as a coordination point for FMN.

Belongs to the pyridoxamine 5'-phosphate oxidase family. In terms of assembly, homodimer. It depends on FMN as a cofactor.

It carries out the reaction pyridoxamine 5'-phosphate + O2 + H2O = pyridoxal 5'-phosphate + H2O2 + NH4(+). It catalyses the reaction pyridoxine 5'-phosphate + O2 = pyridoxal 5'-phosphate + H2O2. Its pathway is cofactor metabolism; pyridoxal 5'-phosphate salvage; pyridoxal 5'-phosphate from pyridoxamine 5'-phosphate: step 1/1. It functions in the pathway cofactor metabolism; pyridoxal 5'-phosphate salvage; pyridoxal 5'-phosphate from pyridoxine 5'-phosphate: step 1/1. In terms of biological role, catalyzes the oxidation of either pyridoxine 5'-phosphate (PNP) or pyridoxamine 5'-phosphate (PMP) into pyridoxal 5'-phosphate (PLP). This is Pyridoxine/pyridoxamine 5'-phosphate oxidase from Rhizobium meliloti (strain 1021) (Ensifer meliloti).